The primary structure comprises 688 residues: Glycine--tRNA ligase beta subunit (688 aa).

The protein belongs to the class-II aminoacyl-tRNA synthetase family. Tetramer of two alpha and two beta subunits.

The protein resides in the cytoplasm. The catalysed reaction is tRNA(Gly) + glycine + ATP = glycyl-tRNA(Gly) + AMP + diphosphate. The polypeptide is Glycine--tRNA ligase beta subunit (Shewanella sp. (strain MR-7)).